The following is a 154-amino-acid chain: MTPDIDRQVALETATELLPTQADLEAWVGAVLARHPDTDRHELSVRFVTADESQALNRDYRGKDKPTNVLSFPFEAPPGLPLALLGDLAICHAVVVDEAAEQGKPLAHHYAHMVIHGTLHLLGYDHIDDREAEEMEALERELLAHFAIGDPYAE.

Residues His-116, His-120, and His-126 each contribute to the Zn(2+) site.

This sequence belongs to the endoribonuclease YbeY family. Requires Zn(2+) as cofactor.

The protein resides in the cytoplasm. Functionally, single strand-specific metallo-endoribonuclease involved in late-stage 70S ribosome quality control and in maturation of the 3' terminus of the 16S rRNA. In Chromohalobacter salexigens (strain ATCC BAA-138 / DSM 3043 / CIP 106854 / NCIMB 13768 / 1H11), this protein is Endoribonuclease YbeY.